We begin with the raw amino-acid sequence, 501 residues long: Endoglucanase 8 (501 aa).

The first 35 residues, 1-35 (MKPRSSRDGHNAAAAAALLLAALVLSGDVLPAVVA), serve as a signal peptide directing secretion. Aspartate 95 serves as the catalytic Nucleophile. Asparagine 298 carries N-linked (GlcNAc...) asparagine glycosylation. Histidine 414 is an active-site residue. The N-linked (GlcNAc...) asparagine glycan is linked to asparagine 462. Aspartate 465 is a catalytic residue. N-linked (GlcNAc...) asparagine glycosylation occurs at asparagine 469. Glutamate 474 is an active-site residue.

This sequence belongs to the glycosyl hydrolase 9 (cellulase E) family.

The protein localises to the secreted. It catalyses the reaction Endohydrolysis of (1-&gt;4)-beta-D-glucosidic linkages in cellulose, lichenin and cereal beta-D-glucans.. The protein is Endoglucanase 8 of Oryza sativa subsp. japonica (Rice).